The chain runs to 160 residues: Glyoxalase domain-containing protein 5 (160 aa).

The region spanning 37–157 (RLDHIVMTVK…DRNLIEVSNY (121 aa)) is the VOC domain.

The protein belongs to the glyoxalase I family.

The sequence is that of Glyoxalase domain-containing protein 5 (GLOD5) from Homo sapiens (Human).